Consider the following 275-residue polypeptide: MGFSSLLTTCRYLLYSGAGNSFILGESMPSLEDVLFLCQEEMVDGFLCVESSEIADAKLTVFNSDGSIASMCGNGLRCAMAHVAQCFGLEDVSIETERGVYQGKFFSMNRVLVDMTLPDWKKAERKLTHVLPGMPEQVFFIDAGVPHVVVFVSDLSKVPVQEWGSFLRYHEDFAPEGVNVDFVQRKKDDLLLVYTYERGCERETLSCGTGMLASALVAADIFSLGQDFSIAVCSRSRNLIKIFSEKGKVFLEGPVSLLNRSENFGWLEPKSRRFG.

Asparagine 20 and asparagine 63 together coordinate substrate. The active-site Proton donor is the cysteine 72. Residues glycine 73–asparagine 74, asparagine 179, and glutamate 197–arginine 198 contribute to the substrate site. The active-site Proton acceptor is cysteine 207. Substrate is bound at residue glycine 208–threonine 209.

This sequence belongs to the diaminopimelate epimerase family. In terms of assembly, homodimer.

The protein localises to the cytoplasm. It carries out the reaction (2S,6S)-2,6-diaminopimelate = meso-2,6-diaminopimelate. The protein operates within amino-acid biosynthesis; L-lysine biosynthesis via DAP pathway; DL-2,6-diaminopimelate from LL-2,6-diaminopimelate: step 1/1. Catalyzes the stereoinversion of LL-2,6-diaminopimelate (L,L-DAP) to meso-diaminopimelate (meso-DAP), a precursor of L-lysine and an essential component of the bacterial peptidoglycan. This chain is Diaminopimelate epimerase, found in Chlamydia trachomatis serovar A (strain ATCC VR-571B / DSM 19440 / HAR-13).